The sequence spans 435 residues: Adenylosuccinate synthetase (435 aa).

GTP contacts are provided by residues 22–28 (GDEGKGK) and 50–52 (GHT). Catalysis depends on Asp-23, which acts as the Proton acceptor. Mg(2+)-binding residues include Asp-23 and Gly-50. Residues 23-26 (DEGK), 48-51 (NAGH), Thr-140, Arg-154, Gln-235, Thr-250, and Arg-314 contribute to the IMP site. His-51 serves as the catalytic Proton donor. Residue 310–316 (ATTGRKR) participates in substrate binding. GTP contacts are provided by residues Arg-316, 342 to 344 (KLD), and 424 to 426 (SVG).

It belongs to the adenylosuccinate synthetase family. As to quaternary structure, homodimer. The cofactor is Mg(2+).

It localises to the cytoplasm. It catalyses the reaction IMP + L-aspartate + GTP = N(6)-(1,2-dicarboxyethyl)-AMP + GDP + phosphate + 2 H(+). It participates in purine metabolism; AMP biosynthesis via de novo pathway; AMP from IMP: step 1/2. In terms of biological role, plays an important role in the de novo pathway of purine nucleotide biosynthesis. Catalyzes the first committed step in the biosynthesis of AMP from IMP. The chain is Adenylosuccinate synthetase from Chlorobaculum tepidum (strain ATCC 49652 / DSM 12025 / NBRC 103806 / TLS) (Chlorobium tepidum).